The sequence spans 235 residues: MHIMEGYLPAIWCIVWFVVSIPVVAYGVYKLNKLVKEERGILPVLAVAGAFIFVLSSLKMPSVTGSCSHPTGTGIGAIIFGPAITAVLSTIVLIYQALFLAHGGLTTLGANVFSMGIVGPIVAYLIYKTGMKAKLNFYLIVFLAATLGDWATYIVTSTELALAFPAGDILTFGGFFSSFSKFVAIFAITQVPLAIVEGAVSALLFKYIIQAKSDLLVEMKVIGEPLVRKLRGLPA.

The next 7 helical transmembrane spans lie at 8–28, 40–60, 74–94, 107–127, 135–155, 160–180, and 185–205; these read LPAI…AYGV, GILP…SLKM, GIGA…IVLI, TLGA…YLIY, LNFY…TYIV, LALA…SSFS, and IFAI…ALLF.

The protein belongs to the CbiM family. Forms an energy-coupling factor (ECF) transporter complex composed of an ATP-binding protein (A component, CbiO), a transmembrane protein (T component, CbiQ) and 2 possible substrate-capture proteins (S components, CbiM and CbiN) of unknown stoichimetry.

It is found in the cell membrane. It participates in cofactor biosynthesis; adenosylcobalamin biosynthesis. Functionally, part of the energy-coupling factor (ECF) transporter complex CbiMNOQ involved in cobalt import. The sequence is that of Putative cobalt transport protein CbiM 2 from Methanosarcina barkeri (strain Fusaro / DSM 804).